The following is a 414-amino-acid chain: Putative cytochrome P450 126 (414 aa).

C363 is a binding site for heme.

Belongs to the cytochrome P450 family. The cofactor is heme.

In Mycobacterium tuberculosis (strain CDC 1551 / Oshkosh), this protein is Putative cytochrome P450 126 (cyp126).